The chain runs to 356 residues: tRNA N6-adenosine threonylcarbamoyltransferase (356 aa).

Residues His110 and His114 each contribute to the Fe cation site. Substrate is bound by residues 133–137 (LVSGG), Asp166, Gly179, and Asn276. Asp304 serves as a coordination point for Fe cation.

The protein belongs to the KAE1 / TsaD family. The cofactor is Fe(2+).

It localises to the cytoplasm. It carries out the reaction L-threonylcarbamoyladenylate + adenosine(37) in tRNA = N(6)-L-threonylcarbamoyladenosine(37) in tRNA + AMP + H(+). Functionally, required for the formation of a threonylcarbamoyl group on adenosine at position 37 (t(6)A37) in tRNAs that read codons beginning with adenine. Is involved in the transfer of the threonylcarbamoyl moiety of threonylcarbamoyl-AMP (TC-AMP) to the N6 group of A37, together with TsaE and TsaB. TsaD likely plays a direct catalytic role in this reaction. This Teredinibacter turnerae (strain ATCC 39867 / T7901) protein is tRNA N6-adenosine threonylcarbamoyltransferase.